Here is a 498-residue protein sequence, read N- to C-terminus: Excisase C (498 aa).

A Tyr recombinase domain is found at K263 to F446. Residues R306, K336, R401, and H424 contribute to the active site. The active-site O-(3'-phospho-DNA)-tyrosine intermediate is Y433.

This sequence belongs to the XisA/XisC recombinase family.

Its function is as follows. Essential for DNA excision. Site specific recombinase necessary for the excision of the 10.5 kb hupL element during heterocyst differentiation. This chain is Excisase C (xisC), found in Nostoc sp. (strain PCC 7120 / SAG 25.82 / UTEX 2576).